The chain runs to 337 residues: Phosphoribosylformylglycinamidine cyclo-ligase (337 aa).

The protein belongs to the AIR synthase family.

Its subcellular location is the cytoplasm. It catalyses the reaction 2-formamido-N(1)-(5-O-phospho-beta-D-ribosyl)acetamidine + ATP = 5-amino-1-(5-phospho-beta-D-ribosyl)imidazole + ADP + phosphate + H(+). It functions in the pathway purine metabolism; IMP biosynthesis via de novo pathway; 5-amino-1-(5-phospho-D-ribosyl)imidazole from N(2)-formyl-N(1)-(5-phospho-D-ribosyl)glycinamide: step 2/2. The chain is Phosphoribosylformylglycinamidine cyclo-ligase from Gloeobacter violaceus (strain ATCC 29082 / PCC 7421).